The sequence spans 44 residues: Conotoxin Rg11a (44 aa).

4 cysteine pairs are disulfide-bonded: cysteine 1-cysteine 15, cysteine 8-cysteine 22, cysteine 14-cysteine 30, and cysteine 21-cysteine 36.

Expressed by the venom duct.

Its subcellular location is the secreted. In terms of biological role, neurotoxin. Elicits hypersensibility when injected intracranially in mice. May act via potassium channel currents. The protein is Conotoxin Rg11a of Conus regius (Crown cone).